A 357-amino-acid chain; its full sequence is Probable leucine aminopeptidase MCYG_04170 (357 aa).

The N-terminal stretch at 1–15 (MKVLAALALSALALA) is a signal peptide. The N-linked (GlcNAc...) asparagine glycan is linked to Asn-76. Positions 167 and 185 each coordinate Zn(2+). An N-linked (GlcNAc...) asparagine glycan is attached at Asn-186. Zn(2+) contacts are provided by Glu-224 and Asp-251. A disulfide bridge links Cys-291 with Cys-295. His-324 lines the Zn(2+) pocket.

The protein belongs to the peptidase M28 family. M28E subfamily. In terms of assembly, monomer. Zn(2+) serves as cofactor.

It localises to the secreted. In terms of biological role, probable extracellular aminopeptidase which contributes to pathogenicity. This chain is Probable leucine aminopeptidase MCYG_04170, found in Arthroderma otae (strain ATCC MYA-4605 / CBS 113480) (Microsporum canis).